Reading from the N-terminus, the 610-residue chain is Elongation factor 4 (610 aa).

Residues 11–193 (ENIRNFSIIA…QIVEKVPAPS (183 aa)) form the tr-type G domain. Residues 23-28 (DHGKST) and 140-143 (NKID) each bind GTP.

The protein belongs to the TRAFAC class translation factor GTPase superfamily. Classic translation factor GTPase family. LepA subfamily.

Its subcellular location is the cell membrane. The catalysed reaction is GTP + H2O = GDP + phosphate + H(+). Functionally, required for accurate and efficient protein synthesis under certain stress conditions. May act as a fidelity factor of the translation reaction, by catalyzing a one-codon backward translocation of tRNAs on improperly translocated ribosomes. Back-translocation proceeds from a post-translocation (POST) complex to a pre-translocation (PRE) complex, thus giving elongation factor G a second chance to translocate the tRNAs correctly. Binds to ribosomes in a GTP-dependent manner. In Streptococcus equi subsp. equi (strain 4047), this protein is Elongation factor 4.